The primary structure comprises 487 residues: Protein nucleotidyltransferase YdiU (487 aa).

ATP is bound by residues Gly-85, Gly-87, Arg-88, Lys-108, Asp-120, Gly-121, Arg-171, and Arg-178. Asp-247 acts as the Proton acceptor in catalysis. Residues Asn-248 and Asp-257 each contribute to the Mg(2+) site. Asp-257 lines the ATP pocket.

Belongs to the SELO family. Mg(2+) serves as cofactor. The cofactor is Mn(2+).

The enzyme catalyses L-seryl-[protein] + ATP = 3-O-(5'-adenylyl)-L-seryl-[protein] + diphosphate. It carries out the reaction L-threonyl-[protein] + ATP = 3-O-(5'-adenylyl)-L-threonyl-[protein] + diphosphate. It catalyses the reaction L-tyrosyl-[protein] + ATP = O-(5'-adenylyl)-L-tyrosyl-[protein] + diphosphate. The catalysed reaction is L-histidyl-[protein] + UTP = N(tele)-(5'-uridylyl)-L-histidyl-[protein] + diphosphate. The enzyme catalyses L-seryl-[protein] + UTP = O-(5'-uridylyl)-L-seryl-[protein] + diphosphate. It carries out the reaction L-tyrosyl-[protein] + UTP = O-(5'-uridylyl)-L-tyrosyl-[protein] + diphosphate. Nucleotidyltransferase involved in the post-translational modification of proteins. It can catalyze the addition of adenosine monophosphate (AMP) or uridine monophosphate (UMP) to a protein, resulting in modifications known as AMPylation and UMPylation. The chain is Protein nucleotidyltransferase YdiU from Agrobacterium fabrum (strain C58 / ATCC 33970) (Agrobacterium tumefaciens (strain C58)).